The primary structure comprises 524 residues: GMP synthase [glutamine-hydrolyzing] (524 aa).

Residues 10 to 199 (PVLVVDFGAQ…LTEVAGLEQT (190 aa)) form the Glutamine amidotransferase type-1 domain. The active-site Nucleophile is the cysteine 87. Residues histidine 173 and glutamate 175 contribute to the active site. Positions 200 to 398 (WTSANIAQQL…LGLPEEIVAR (199 aa)) constitute a GMPS ATP-PPase domain. 228–234 (SGGVDSA) serves as a coordination point for ATP.

Homodimer.

The enzyme catalyses XMP + L-glutamine + ATP + H2O = GMP + L-glutamate + AMP + diphosphate + 2 H(+). It functions in the pathway purine metabolism; GMP biosynthesis; GMP from XMP (L-Gln route): step 1/1. Functionally, catalyzes the synthesis of GMP from XMP. This chain is GMP synthase [glutamine-hydrolyzing] (guaA), found in Corynebacterium ammoniagenes (Brevibacterium ammoniagenes).